The chain runs to 244 residues: Probable proteasome subunit alpha type-1 (244 aa).

This sequence belongs to the peptidase T1A family. The 26S proteasome consists of a 20S proteasome core and two 19S regulatory subunits. The 20S proteasome core is composed of 28 subunits that are arranged in four stacked rings, resulting in a barrel-shaped structure. The two end rings are each formed by seven alpha subunits, and the two central rings are each formed by seven beta subunits. The catalytic chamber with the active sites is on the inside of the barrel.

It is found in the cytoplasm. Its subcellular location is the nucleus. Functionally, the proteasome is a multicatalytic proteinase complex which is characterized by its ability to cleave peptides with Arg, Phe, Tyr, Leu, and Glu adjacent to the leaving group at neutral or slightly basic pH. The proteasome has an ATP-dependent proteolytic activity. This Schizosaccharomyces pombe (strain 972 / ATCC 24843) (Fission yeast) protein is Probable proteasome subunit alpha type-1.